The chain runs to 485 residues: Alpha-amylase (485 aa).

The N-terminal stretch at 1–18 is a signal peptide; the sequence is MQHLSILLVVLGSSIAFA. Position 19 is a pyrrolidone carboxylic acid (Q19). The cysteines at positions 46 and 102 are disulfide-linked. Residues N116, R163, and D172 each contribute to the Ca(2+) site. C152 and C165 are disulfide-bonded. Chloride is bound at residue R200. The Nucleophile role is filled by D202. H206 is a Ca(2+) binding site. The active-site Proton donor is the E238. N301 is a binding site for chloride. C369 and C375 are joined by a disulfide. Residues N423 and N449 are each glycosylated (N-linked (GlcNAc...) asparagine). Residues C440 and C452 are joined by a disulfide bond.

The protein belongs to the glycosyl hydrolase 13 family. In terms of assembly, monomer. Ca(2+) is required as a cofactor. Chloride serves as cofactor.

The catalysed reaction is Endohydrolysis of (1-&gt;4)-alpha-D-glucosidic linkages in polysaccharides containing three or more (1-&gt;4)-alpha-linked D-glucose units.. Functionally, involved in the digestion of starch. The sequence is that of Alpha-amylase from Hypothenemus hampei (Coffee berry borer).